Here is a 297-residue protein sequence, read N- to C-terminus: Bifunctional protein FolD 1 (297 aa).

NADP(+)-binding positions include 164–166, Ser193, and Ile234; that span reads GRS.

This sequence belongs to the tetrahydrofolate dehydrogenase/cyclohydrolase family. As to quaternary structure, homodimer.

The enzyme catalyses (6R)-5,10-methylene-5,6,7,8-tetrahydrofolate + NADP(+) = (6R)-5,10-methenyltetrahydrofolate + NADPH. The catalysed reaction is (6R)-5,10-methenyltetrahydrofolate + H2O = (6R)-10-formyltetrahydrofolate + H(+). Its pathway is one-carbon metabolism; tetrahydrofolate interconversion. In terms of biological role, catalyzes the oxidation of 5,10-methylenetetrahydrofolate to 5,10-methenyltetrahydrofolate and then the hydrolysis of 5,10-methenyltetrahydrofolate to 10-formyltetrahydrofolate. This chain is Bifunctional protein FolD 1, found in Haloarcula marismortui (strain ATCC 43049 / DSM 3752 / JCM 8966 / VKM B-1809) (Halobacterium marismortui).